A 485-amino-acid chain; its full sequence is Cytolytic protein enterolobin (485 aa).

Disulfide bonds link Cys-34/Cys-98 and Cys-183/Cys-189.

Belongs to the aerolysin family. As to quaternary structure, oligomerizes as a hexamer. The N-terminus is blocked.

Cytolytic protein with insecticidal activity. Acts as a pro-inflammatory agent. This Enterolobium contortisiliquum (Pacara earpod tree) protein is Cytolytic protein enterolobin.